A 39-amino-acid chain; its full sequence is LIM/homeobox protein xLIM-2B (39 aa).

A DNA-binding region (homeobox) is located at residues 1–39 (KAKQLETLKAAFAATPKPTRHIREQLAQETGLNMRVIQV).

The protein resides in the nucleus. This Xenopus laevis (African clawed frog) protein is LIM/homeobox protein xLIM-2B (lim2b).